The primary structure comprises 377 residues: Short chain dehydrogenase gsfE (377 aa).

Positions 89, 121, 226, 266, and 268 each coordinate NADP(+). The Proton donor role is filled by Tyr-226.

This sequence belongs to the short-chain dehydrogenases/reductases (SDR) family. Highly divergent.

It catalyses the reaction dehydrogriseofulvin + NADPH + H(+) = griseofulvin + NADP(+). It participates in secondary metabolite biosynthesis; terpenoid biosynthesis. Short chain dehydrogenase; part of the gene cluster that mediates the biosynthesis of griseofulvin, an important antifungal drug that has been in use for a long time for treating dermatophyte infections. The first step of the pathway is the formation of the heptaketide backbone by gsfA which is initiated by priming with acetyl-CoA, followed by sequential condensations of 6 malonyl-CoA units. The resulting benzophenone can undergo a spontaneous dehydration to form norlichexanthone. However, the true precursor for the griseofulvin biosynthesis is not norlichexanthone, but the heptaketide benzophenone that is O-methylated at 3-OH by gsfB to produce griseophenone D which is further methylated at 9-OH by gsfC to yield griseophenone C. Griseophenone C is then substrate of halogenase gsfI which is responsible for the regio-specific chlorination at the C13 position to form griseophenone B. The cytochrome P450 gsfF catalyzes the coupling of orcinol and phloroglucinol rings in griseophenone B to form desmethyl-dehydrogriseofulvin A which is further methylated at 5-OH by gsfD to yield dehydrogriseofulvin. Finally, gsfE performs stereospecific reduction of enone 18 of dehydrogriseofulvin to afford the final product griseofulvin. In Penicillium aethiopicum, this protein is Short chain dehydrogenase gsfE.